An 83-amino-acid chain; its full sequence is MSGVVAVQVCTAWTSTPEGFMACRELAWQQAYLIPPEAAGYVDILVNGGFSPEAFGIGAAGVLGSFVTGLLIGWVASLLRKAK.

Residues 55–75 (FGIGAAGVLGSFVTGLLIGWV) traverse the membrane as a helical segment.

It localises to the host membrane. In terms of biological role, may play a role in phage assembly. This is an uncharacterized protein from Pseudomonas phage Pf1 (Bacteriophage Pf1).